Consider the following 391-residue polypeptide: Tryptophan synthase beta chain (391 aa).

Lysine 84 carries the post-translational modification N6-(pyridoxal phosphate)lysine.

This sequence belongs to the TrpB family. Tetramer of two alpha and two beta chains. The cofactor is pyridoxal 5'-phosphate.

The enzyme catalyses (1S,2R)-1-C-(indol-3-yl)glycerol 3-phosphate + L-serine = D-glyceraldehyde 3-phosphate + L-tryptophan + H2O. It participates in amino-acid biosynthesis; L-tryptophan biosynthesis; L-tryptophan from chorismate: step 5/5. In terms of biological role, the beta subunit is responsible for the synthesis of L-tryptophan from indole and L-serine. This is Tryptophan synthase beta chain from Caldanaerobacter subterraneus subsp. tengcongensis (strain DSM 15242 / JCM 11007 / NBRC 100824 / MB4) (Thermoanaerobacter tengcongensis).